A 966-amino-acid chain; its full sequence is Receptor protein-tyrosine kinase CEPR1 (966 aa).

The N-terminal stretch at 1–22 (MRLKNFPFFVLFFFFCFNSNQS) is a signal peptide. The Extracellular portion of the chain corresponds to 23-592 (WGLMSSNQQP…QEPHGKKKLS (570 aa)). N-linked (GlcNAc...) asparagine glycosylation is present at Asn-61. LRR repeat units follow at residues 70–94 (QGLV…VCSY), 95–120 (FPNL…TIPN), 122–144 (SLLR…FSQM), 145–168 (KSLR…IFNL), 170–194 (DLEY…VSKL), 195–218 (TKLT…IGNL), 219–242 (TSLV…IGNL), 245–267 (LRQL…IGNL), 268–291 (KNLT…ICSL), 292–315 (PNLR…LGNS), 317–339 (TLKI…LGSS), 341–363 (PMIA…VCKS), 365–386 (KLLY…TYGS), 387–411 (CKTL…VMSL), 412–435 (PHVS…IGNA), 437–459 (NLSE…LSHS), 460–483 (TNLV…VGRL), 484–507 (RKLN…LSNL), 508–531 (KSLN…LSEL), and 533–554 (PTSI…LIRG). 4 N-linked (GlcNAc...) asparagine glycosylation sites follow: Asn-109, Asn-120, Asn-128, and Asn-167. Asn-217 and Asn-241 each carry an N-linked (GlcNAc...) asparagine glycan. Residues Asn-269 and Asn-301 are each glycosylated (N-linked (GlcNAc...) asparagine). N-linked (GlcNAc...) asparagine glycosylation is present at Asn-437. Residues Asn-527 and Asn-537 are each glycosylated (N-linked (GlcNAc...) asparagine). A helical transmembrane segment spans residues 593–613 (SIWAILVSVFILVLGVIMFYL). The Cytoplasmic segment spans residues 614 to 966 (RQRMSKNRAV…VSDHLTQTRL (353 aa)). Residues 656-934 (LVDKNIVGHG…TMNEVVQLLI (279 aa)) enclose the Protein kinase domain. Residues 662-670 (VGHGGSGTV) and Lys-684 contribute to the ATP site. Phosphotyrosine is present on residues Tyr-738 and Tyr-775. Catalysis depends on Asp-788, which acts as the Proton acceptor. Phosphotyrosine occurs at positions 831 and 838. A disordered region spans residues 937-966 (TPQGGPDMTSKPTTKIKDSIVSDHLTQTRL).

It belongs to the protein kinase superfamily. Ser/Thr protein kinase family. In terms of assembly, interacts with the root-derived peptides CEP1, CEP3 and CEP5. As to expression, expressed in the vasculature, especially in phloem and procambium regions, of stems, leaves, cotyledons, sepals, pedals, pedicels, hypocotyls and roots (in primary and lateral roots, but not in root tips). Expressed in the root from the basal meristem onward. Present in the phloem pole pericycle and in the adjacent phloem.

It is found in the cell membrane. It catalyses the reaction L-tyrosyl-[protein] + ATP = O-phospho-L-tyrosyl-[protein] + ADP + H(+). Its function is as follows. Receptor kinase involved in the perception of C-terminally encoded plant signaling peptide (CEP) and subsequent regulation of root and shoot development. Required for xylem and phloem cell files morphology and organization, probably by preventing ectopic lignification in phloem cells. Together with CEPR2, mediates systemic nitrogen (N)-demand signaling upon the perception of root-derived peptides (e.g. CEP1) via the up-regulation of genes involved in N uptake and assimilation pathways. Positively regulates lateral root initiation and development; probably repressed by the signaling peptide CEP5. The chain is Receptor protein-tyrosine kinase CEPR1 from Arabidopsis thaliana (Mouse-ear cress).